A 208-amino-acid polypeptide reads, in one-letter code: Small ribosomal subunit protein uS4 (208 aa).

An S4 RNA-binding domain is found at 98 to 161 (RRLDNTIYRL…RQSPIILEAQ (64 aa)).

The protein belongs to the universal ribosomal protein uS4 family. In terms of assembly, part of the 30S ribosomal subunit. Contacts protein S5. The interaction surface between S4 and S5 is involved in control of translational fidelity.

In terms of biological role, one of the primary rRNA binding proteins, it binds directly to 16S rRNA where it nucleates assembly of the body of the 30S subunit. Functionally, with S5 and S12 plays an important role in translational accuracy. The chain is Small ribosomal subunit protein uS4 from Solidesulfovibrio magneticus (strain ATCC 700980 / DSM 13731 / RS-1) (Desulfovibrio magneticus).